A 409-amino-acid polypeptide reads, in one-letter code: Probable beta-1,3-galactosyltransferase 3 (409 aa).

The helical; Signal-anchor for type II membrane protein transmembrane segment at 20 to 42 threads the bilayer; sequence WTFLLCFGSFCFGILFTDRMWII.

Belongs to the glycosyltransferase 31 family. Mn(2+) serves as cofactor.

It is found in the golgi apparatus membrane. It functions in the pathway protein modification; protein glycosylation. Functionally, beta-1,3-galactosyltransferase that transfers galactose from UDP-galactose to substrates with a terminal glycosyl residue. This is Probable beta-1,3-galactosyltransferase 3 (B3GALT3) from Arabidopsis thaliana (Mouse-ear cress).